The following is an 86-amino-acid chain: Co-chaperonin GroES (86 aa).

This sequence belongs to the GroES chaperonin family. In terms of assembly, heptamer of 7 subunits arranged in a ring. Interacts with the chaperonin GroEL.

The protein resides in the cytoplasm. Functionally, together with the chaperonin GroEL, plays an essential role in assisting protein folding. The GroEL-GroES system forms a nano-cage that allows encapsulation of the non-native substrate proteins and provides a physical environment optimized to promote and accelerate protein folding. GroES binds to the apical surface of the GroEL ring, thereby capping the opening of the GroEL channel. In Campylobacter jejuni subsp. jejuni serotype O:6 (strain 81116 / NCTC 11828), this protein is Co-chaperonin GroES.